Reading from the N-terminus, the 407-residue chain is Biotin synthase (407 aa).

Residues 47-277 (WFGRRVKLNY…DVEVRIAGGR (231 aa)) form the Radical SAM core domain. Cysteine 65, cysteine 69, and cysteine 72 together coordinate [4Fe-4S] cluster. [2Fe-2S] cluster contacts are provided by cysteine 109, cysteine 142, cysteine 202, and arginine 272. The disordered stretch occupies residues 368–407 (GGGVCAPAPAATTPRPAEEPRTDLVAVRRRGAGTDLAPNA). A compositionally biased stretch (low complexity) spans 373–382 (APAPAATTPR).

It belongs to the radical SAM superfamily. Biotin synthase family. As to quaternary structure, homodimer. The cofactor is [4Fe-4S] cluster. Requires [2Fe-2S] cluster as cofactor.

The enzyme catalyses (4R,5S)-dethiobiotin + (sulfur carrier)-SH + 2 reduced [2Fe-2S]-[ferredoxin] + 2 S-adenosyl-L-methionine = (sulfur carrier)-H + biotin + 2 5'-deoxyadenosine + 2 L-methionine + 2 oxidized [2Fe-2S]-[ferredoxin]. It functions in the pathway cofactor biosynthesis; biotin biosynthesis; biotin from 7,8-diaminononanoate: step 2/2. Its function is as follows. Catalyzes the conversion of dethiobiotin (DTB) to biotin by the insertion of a sulfur atom into dethiobiotin via a radical-based mechanism. The protein is Biotin synthase of Streptomyces coelicolor (strain ATCC BAA-471 / A3(2) / M145).